The sequence spans 156 residues: Ribonuclease pancreatic (156 aa).

The first 28 residues, 1–28, serve as a signal peptide directing secretion; that stretch reads MALEKSLVRLLLLVLILLVLGWVQPSLG. The span at 33–43 shows a compositional bias: basic and acidic residues; it reads AKKFQRQHMDS. Positions 33-53 are disordered; it reads AKKFQRQHMDSDSSPSSSSTY. Lys-35 and Arg-38 together coordinate substrate. Residue His-40 is the Proton acceptor of the active site. Intrachain disulfides connect Cys-54–Cys-112, Cys-68–Cys-123, Cys-86–Cys-138, and Cys-93–Cys-100. A glycan (N-linked (GlcNAc...) asparagine; partial) is linked at Asn-62. Substrate-binding positions include 69–73 and Lys-94; that span reads KPVNT. A glycan (N-linked (GlcNAc...) asparagine) is linked at Asn-104. A substrate-binding site is contributed by Arg-113. Asn-116 carries N-linked (GlcNAc...) asparagine glycosylation. His-147 acts as the Proton donor in catalysis.

Belongs to the pancreatic ribonuclease family. In terms of assembly, monomer. Interacts with and forms tight 1:1 complexes with RNH1. Dimerization of two such complexes may occur. Interaction with RNH1 inhibits this protein. In terms of processing, N-linked glycans are of complex type. In terms of tissue distribution, pancreas and other tissues and body fluids (indicating it may have other physiological functions besides its role in digestion).

It localises to the secreted. It catalyses the reaction an [RNA] containing cytidine + H2O = an [RNA]-3'-cytidine-3'-phosphate + a 5'-hydroxy-ribonucleotide-3'-[RNA].. The catalysed reaction is an [RNA] containing uridine + H2O = an [RNA]-3'-uridine-3'-phosphate + a 5'-hydroxy-ribonucleotide-3'-[RNA].. Endonuclease that catalyzes the cleavage of RNA on the 3' side of pyrimidine nucleotides. Acts on single-stranded and double-stranded RNA. This chain is Ribonuclease pancreatic (RNASE1), found in Homo sapiens (Human).